Reading from the N-terminus, the 62-residue chain is Prokaryotic ubiquitin-like protein Pup 2 (62 aa).

Residues 1–34 (MRQEKPKRHGREDDEPPEPAPAGRARDTTVGDDT) are disordered. The interval 21–56 (PAGRARDTTVGDDTDELLDEIDGVLEENAVEFVRSY) is ARC ATPase binding. Residue Glu-62 forms an Isoglutamyl lysine isopeptide (Glu-Lys) (interchain with K-? in acceptor proteins) linkage.

It belongs to the prokaryotic ubiquitin-like protein family. Strongly interacts with the proteasome-associated ATPase ARC through a hydrophobic interface; the interacting region of Pup lies in its C-terminal half. There is one Pup binding site per ARC hexamer ring.

The protein operates within protein degradation; proteasomal Pup-dependent pathway. Its function is as follows. Protein modifier that is covalently attached to lysine residues of substrate proteins, thereby targeting them for proteasomal degradation. The tagging system is termed pupylation. The protein is Prokaryotic ubiquitin-like protein Pup 2 of Saccharopolyspora erythraea (strain ATCC 11635 / DSM 40517 / JCM 4748 / NBRC 13426 / NCIMB 8594 / NRRL 2338).